The following is a 383-amino-acid chain: Protein delta homolog 1 (383 aa).

Positions 1 to 23 (MTATEALLRVLLLLLAFGHSTYG) are cleaved as a signal peptide. 6 consecutive EGF-like domains span residues 24–55 (AECFPACNPQNGFCEDDNVCRCQPGWQGPLCD), 53–86 (LCDQCVTSPGCLHGLCGEPGQCICTDGWDGELCD), 88–125 (DVRACSSAPCANNRTCVSLDDGLYECSCAPGYSGKDCQ), 127–168 (KDGP…NFCE), 170–206 (VANSCTPNPCENDGVCTDIGGDFRCRCPAGFIDKTCS), and 208–245 (PVTNCASSPCQNGGTCLQHTQVSYECLCKPEFTGLTCV). Over 24 to 303 (AECFPACNPQ…KKTPLLTEGQ (280 aa)) the chain is Extracellular. 12 cysteine pairs are disulfide-bonded: C26/C37, C30/C43, C45/C54, C57/C68, C63/C74, C76/C85, C92/C103, C97/C113, C115/C124, C131/C144, C138/C156, and C158/C167. An O-linked (GalNAc...) serine glycan is attached at S94. N-linked (GlcNAc...) asparagine glycosylation is present at N100. An O-linked (GalNAc...) threonine glycan is attached at T143. Residue S163 is glycosylated (O-linked (GalNAc...) serine; partial). N-linked (GlcNAc...) asparagine; atypical; partial glycans are attached at residues N165 and N172. Cystine bridges form between C174–C185, C179–C194, C196–C205, C212–C223, C217–C233, and C235–C244. S214 carries O-linked (GalNAc...) serine glycosylation. Residue T222 is glycosylated (O-linked (GalNAc...) threonine; partial). S251 carries an O-linked (GalNAc...) serine; partial glycan. The O-linked (GalNAc...) threonine glycan is linked to T256. A glycan (O-linked (GalNAc...) serine; partial) is linked at S260. A helical membrane pass occupies residues 304–327 (AICFTILGVLTSLVVLGTVGIVFL). Topologically, residues 328–383 (NKCETWVSNLRYNHMLRKKKNLLLQYNSGEDLAVNIIFPEKIDMTTFSKEAGDEEI) are cytoplasmic.

As to quaternary structure, monomer. Interacts with SH3RF2. N- and O-glycosylated. O-glycosylated with core 1 or possibly core 8 glycans. As to expression, found within the stromal cells in close contact to the vascular structure of placental villi, yolk sac, fetal liver, adrenal cortex and pancreas and in the beta cells of the islets of Langerhans in the adult pancreas. Found also in some forms of neuroendocrine lung tumor tissue.

It is found in the membrane. The protein localises to the cytoplasm. May have a role in neuroendocrine differentiation. This Homo sapiens (Human) protein is Protein delta homolog 1 (DLK1).